We begin with the raw amino-acid sequence, 687 residues long: Protein-glutamine gamma-glutamyltransferase 2 (687 aa).

The residue at position 2 (A2) is an N-acetylalanine. Disulfide bonds link C230–C370 and C370–C371. Residues C277, H335, and D358 contribute to the active site. Residues N398, D400, E437, E447, and E452 each coordinate Ca(2+). Residue K468 is modified to N6-acetyllysine. 476-483 contributes to the GTP binding site; the sequence is RIRVGEGM. E539 contacts Ca(2+). 580–583 is a GTP binding site; that stretch reads RDIY. Q633 is covalently cross-linked (Isoglutamyl lysine isopeptide (Gln-Lys) (interchain with K-?)).

This sequence belongs to the transglutaminase superfamily. Transglutaminase family. In terms of assembly, monomer. Interacts with phospholipase C; promoting alpha-1 adrenergic receptor signaling. Interacts with PLCD1. Ca(2+) serves as cofactor. Disulfide bond formation inactivates the calcium-dependent acyltransferase activity. Cys-370 can form disulfide bonds with both Cys-230 and Cys-371: formation of a disulfide bond between Cys-230 and Cys-370 facilitates formation of the disulfide between Cys-370 and Cys-371, which promotes inactivation of the acyltransferase activity. May also form interchain disulfids between Cys-230 and Cys-370. Ca(2+) protects against disulfide bond formation and inactivation. In terms of processing, auto-transglutaminated: Forms covalent cross-links mediated by transglutaminase between Gln-633 and the epsilon-amino group of a lysine residue of itself or HMGB1, forming homopolymers and heteropolymers, respectively. Post-translationally, S-nitrosylated, leading to inactivation of the acyltransferase activity. In terms of tissue distribution, highest levels are detected in the lung. Lower levels are found in the liver, spleen and heart, but not in the brain.

It localises to the cytoplasm. The protein localises to the cytosol. Its subcellular location is the nucleus. It is found in the chromosome. The protein resides in the secreted. It localises to the extracellular space. The protein localises to the extracellular matrix. Its subcellular location is the cell membrane. It is found in the mitochondrion. It carries out the reaction L-glutaminyl-[protein] + L-lysyl-[protein] = [protein]-L-lysyl-N(6)-5-L-glutamyl-[protein] + NH4(+). It catalyses the reaction L-glutaminyl-[protein] + serotonin = 5-serotonyl-L-glutamyl-[protein] + NH4(+). The enzyme catalyses L-glutaminyl-[protein] + dopamine = 5-dopaminyl-L-glutamyl-[protein] + NH4(+). The catalysed reaction is L-glutaminyl-[protein] + histamine = 5-histaminyl-L-glutamyl-[protein] + NH4(+). It carries out the reaction L-glutaminyl-[protein] + (R)-noradrenaline = 5-(R)-noradrenalinyl-L-glutamyl-[protein] + NH4(+). It catalyses the reaction L-glutaminyl-[protein] + H2O = L-glutamyl-[protein] + NH4(+). With respect to regulation, acyltransferase activity is regulated by the binding of GTP and Ca(2+): inactivated by GTP, which stabilizes its closed structure, thereby obstructing the accessibility of substrates to the active sites. In contrast, Ca(2+) acts as a cofactor by inducing conformational change to the active open form. In absence of Ca(2+), Mg(2+) may bind Ca(2+)-binding sites, promoting GTP-binding and subsequent inhibition of the acyltransferase activity. Extracellularly reduced and activated by CLIC3. In terms of biological role, calcium-dependent acyltransferase that catalyzes the formation of covalent bonds between peptide-bound glutamine and various primary amines, such as gamma-amino group of peptide-bound lysine, or mono- and polyamines, thereby producing cross-linked or aminated proteins, respectively. Involved in many biological processes, such as bone development, angiogenesis, wound healing, cellular differentiation, chromatin modification and apoptosis. Acts as a protein-glutamine gamma-glutamyltransferase by mediating the cross-linking of proteins, such as ACO2, HSPB6, FN1, HMGB1, RAP1GDS1, SLC25A4/ANT1, SPP1 and WDR54. Under physiological conditions, the protein cross-linking activity is inhibited by GTP; inhibition is relieved by Ca(2+) in response to various stresses. When secreted, catalyzes cross-linking of proteins of the extracellular matrix, such as FN1 and SPP1 resulting in the formation of scaffolds. Plays a key role during apoptosis, both by (1) promoting the cross-linking of cytoskeletal proteins resulting in condensation of the cytoplasm, and by (2) mediating cross-linking proteins of the extracellular matrix, resulting in the irreversible formation of scaffolds that stabilize the integrity of the dying cells before their clearance by phagocytosis, thereby preventing the leakage of harmful intracellular components. In addition to protein cross-linking, can use different monoamine substrates to catalyze a vast array of protein post-translational modifications: mediates aminylation of serotonin, dopamine, noradrenaline or histamine into glutamine residues of target proteins to generate protein serotonylation, dopaminylation, noradrenalinylation or histaminylation, respectively. Mediates protein serotonylation of small GTPases during activation and aggregation of platelets, leading to constitutive activation of these GTPases. Plays a key role in chromatin organization by mediating serotonylation and dopaminylation of histone H3. Catalyzes serotonylation of 'Gln-5' of histone H3 (H3Q5ser) during serotonergic neuron differentiation, thereby facilitating transcription. Acts as a mediator of neurotransmission-independent role of nuclear dopamine in ventral tegmental area (VTA) neurons: catalyzes dopaminylation of 'Gln-5' of histone H3 (H3Q5dop), thereby regulating relapse-related transcriptional plasticity in the reward system. Regulates vein remodeling by mediating serotonylation and subsequent inactivation of ATP2A2/SERCA2. Also acts as a protein deamidase by mediating the side chain deamidation of specific glutamine residues of proteins to glutamate. Catalyzes specific deamidation of protein gliadin, a component of wheat gluten in the diet. May also act as an isopeptidase cleaving the previously formed cross-links. Also able to participate in signaling pathways independently of its acyltransferase activity: acts as a signal transducer in alpha-1 adrenergic receptor-mediated stimulation of phospholipase C-delta (PLCD) activity and is required for coupling alpha-1 adrenergic agonists to the stimulation of phosphoinositide lipid metabolism. The polypeptide is Protein-glutamine gamma-glutamyltransferase 2 (Bos taurus (Bovine)).